The sequence spans 425 residues: Proline--tRNA ligase (425 aa).

Belongs to the class-II aminoacyl-tRNA synthetase family. ProS type 2 subfamily. In terms of assembly, homodimer.

It is found in the cytoplasm. It catalyses the reaction tRNA(Pro) + L-proline + ATP = L-prolyl-tRNA(Pro) + AMP + diphosphate. Functionally, catalyzes the attachment of proline to tRNA(Pro) in a two-step reaction: proline is first activated by ATP to form Pro-AMP and then transferred to the acceptor end of tRNA(Pro). This is Proline--tRNA ligase from Anaplasma marginale (strain St. Maries).